Consider the following 295-residue polypeptide: Nucleotide-binding protein LSL_1171 (295 aa).

13 to 20 (GMSGAGKT) lines the ATP pocket. 63-66 (DLRS) lines the GTP pocket.

This sequence belongs to the RapZ-like family.

Displays ATPase and GTPase activities. This Ligilactobacillus salivarius (strain UCC118) (Lactobacillus salivarius) protein is Nucleotide-binding protein LSL_1171.